The following is a 464-amino-acid chain: ATP synthase subunit beta (464 aa).

153–160 is an ATP binding site; sequence GGAGVGKT.

Belongs to the ATPase alpha/beta chains family. As to quaternary structure, F-type ATPases have 2 components, CF(1) - the catalytic core - and CF(0) - the membrane proton channel. CF(1) has five subunits: alpha(3), beta(3), gamma(1), delta(1), epsilon(1). CF(0) has three main subunits: a(1), b(2) and c(9-12). The alpha and beta chains form an alternating ring which encloses part of the gamma chain. CF(1) is attached to CF(0) by a central stalk formed by the gamma and epsilon chains, while a peripheral stalk is formed by the delta and b chains.

It is found in the cell inner membrane. The catalysed reaction is ATP + H2O + 4 H(+)(in) = ADP + phosphate + 5 H(+)(out). Functionally, produces ATP from ADP in the presence of a proton gradient across the membrane. The catalytic sites are hosted primarily by the beta subunits. The chain is ATP synthase subunit beta from Burkholderia orbicola (strain MC0-3).